The primary structure comprises 516 residues: Putative glucosylceramidase 2 (516 aa).

The signal sequence occupies residues 1-23 (MSIAWSCFVLGLFALASLQVALA). The Proton donor role is filled by Glu-254. Glu-358 functions as the Nucleophile in the catalytic mechanism.

Belongs to the glycosyl hydrolase 30 family.

It catalyses the reaction a beta-D-glucosylceramide + H2O = an N-acyl-sphingoid base + D-glucose. It carries out the reaction a beta-D-glucosyl-(1&lt;-&gt;1')-N-acylsphing-4-enine + H2O = an N-acylsphing-4-enine + D-glucose. The catalysed reaction is an N-acyl-1-beta-D-glucosyl-15-methylhexadecasphing-4-enine + H2O = an N-acyl-15-methylhexadecasphing-4-enine + D-glucose. It functions in the pathway lipid metabolism; sphingolipid metabolism. In terms of biological role, glucosylceramidase that catalyzes the hydrolysis of glucosylceramides into free ceramides and glucose. C.elegans contain specific sphingoid bases, which are unique or different in structure compared to the sphingoid bases found in other animals. Two examples of these distinctive compounds are: 15-methylhexadecasphinganine and 15-methylhexadecasphing-4-enine. The sequence is that of Putative glucosylceramidase 2 (gba-2) from Caenorhabditis elegans.